Here is a 148-residue protein sequence, read N- to C-terminus: Ubiquitin-conjugating enzyme E2 5B (148 aa).

The region spanning 1–147 (MASKRILKEL…ARSWTQKYAM (147 aa)) is the UBC core domain. The Glycyl thioester intermediate role is filled by Cys-85.

Belongs to the ubiquitin-conjugating enzyme family.

The enzyme catalyses S-ubiquitinyl-[E1 ubiquitin-activating enzyme]-L-cysteine + [E2 ubiquitin-conjugating enzyme]-L-cysteine = [E1 ubiquitin-activating enzyme]-L-cysteine + S-ubiquitinyl-[E2 ubiquitin-conjugating enzyme]-L-cysteine.. The protein operates within protein modification; protein ubiquitination. Functionally, E2 conjugating enzyme that associates with the E3 ubiquitin-protein ligase EL5 to mediate ubiquitination of target proteins. This chain is Ubiquitin-conjugating enzyme E2 5B (UBC5B), found in Oryza sativa subsp. japonica (Rice).